A 436-amino-acid polypeptide reads, in one-letter code: GTPase Der (436 aa).

EngA-type G domains lie at 4–167 (PVIA…PKIE) and 176–351 (IRFS…ESHS). Residues 10–17 (GRPNVGKS), 57–61 (DTGGI), 119–122 (NKVD), 182–189 (GRPNVGKS), 229–233 (DTAGM), and 294–297 (NKWD) each bind GTP. The 85-residue stretch at 352–436 (IRIQTNVLND…PIHIIARARD (85 aa)) folds into the KH-like domain.

The protein belongs to the TRAFAC class TrmE-Era-EngA-EngB-Septin-like GTPase superfamily. EngA (Der) GTPase family. Associates with the 50S ribosomal subunit.

In terms of biological role, GTPase that plays an essential role in the late steps of ribosome biogenesis. This is GTPase Der from Bacillus anthracis (strain A0248).